The primary structure comprises 383 residues: Fatty acid hydroxylase ahd1 (383 aa).

The next 4 helical transmembrane spans lie at 84–104 (VMGL…NKSW), 123–143 (TVHT…LFAL), 172–192 (LIPV…IIYY), and 214–236 (VAQW…RALH). Residues 217–341 (WLVCLLMEDI…VGLLDAIFKT (125 aa)) form the Fatty acid hydroxylase domain. An N-linked (GlcNAc...) asparagine glycan is attached at asparagine 342.

This sequence belongs to the sterol desaturase family.

Its subcellular location is the membrane. It functions in the pathway secondary metabolite biosynthesis. In terms of biological role, fatty acid hydroxylase; part of the gene cluster that mediates the biosynthesis of the glycolipid biosurfactant ustilagic acid (UA). UA is a secreted cellobiose glycolipid that is toxic for many microorganisms and confers biocontrol activity to U.maydis. UA consists of 15,16-dihydroxypalmitic or 2,15,16-trihydroxypalmitic acid, which is O-glycosidically linked to cellobiose at its terminal hydroxyl group. In addition, the cellobiose moiety is acetylated and acylated with a short-chain hydroxy fatty acid. UA biosynthesis starts with omega-hydroxylation of palmitic acid catalyzed by the cytochrome P450 monooxygenase cyp1. Terminal hydroxylation of palmitic acid precedes subterminal hydroxylation catalyzed by the cytochrome P450 monooxygenase cyp2. Sequential glucosylation of the hydroxy fatty acid is probably catalyzed by the glycosyltransferase ugt1. The cellobiose lipid is further decorated by acetylation of the proximal glucose residue and by acylation with a short-chain beta-hydroxy fatty acid at the distal glucose residue. The acyltransferase uat1 may be a good candidate for catalyzing either acetylation or acylation of the cellobiose lipid. The fatty acid synthase fas2 may be involved in synthesis of the carbon backbone of the short-chain beta-hydroxy fatty acid esterified to the cellobiose disaccharide. The secreted UA consists of a mixture of both alpha-hydroxylated and non-hydroxylated glycolipids; therefore, alpha-hydroxylation of the long-chain fatty, catalyzed by the fatty acid hydroxylase ahd1, occurs late in UA biosynthesis and may be the last step before secretion. The protein is Fatty acid hydroxylase ahd1 of Mycosarcoma maydis (Corn smut fungus).